Consider the following 503-residue polypeptide: Probable DNA double-strand break repair helicase HerA (503 aa).

Residues R122, 131-136 (GGGKSN), and 478-479 (KI) each bind ATP.

The protein belongs to the HerA family.

It catalyses the reaction Couples ATP hydrolysis with the unwinding of duplex DNA at the replication fork by translocating in the 5'-3' direction. This creates two antiparallel DNA single strands (ssDNA). The leading ssDNA polymer is the template for DNA polymerase III holoenzyme which synthesizes a continuous strand.. It carries out the reaction ATP + H2O = ADP + phosphate + H(+). The catalysed reaction is Couples ATP hydrolysis with the unwinding of duplex DNA by translocating in the 3'-5' direction.. Functionally, involved in DNA double-strand break (DSB) repair. Probably acts with NurA to stimulate resection of the 5' strand and produce the long 3' single-strand that is required for RadA loading. Has DNA-dependent ATPase activity and DNA helicase activity. This Methanocaldococcus jannaschii (strain ATCC 43067 / DSM 2661 / JAL-1 / JCM 10045 / NBRC 100440) (Methanococcus jannaschii) protein is Probable DNA double-strand break repair helicase HerA.